An 89-amino-acid polypeptide reads, in one-letter code: Protein YihD (89 aa).

It to H.influenzae HI_0845.

The chain is Protein YihD (yihD) from Escherichia coli O157:H7.